A 349-amino-acid chain; its full sequence is UDP-3-O-acylglucosamine N-acyltransferase 1 (349 aa).

His241 acts as the Proton acceptor in catalysis.

The protein belongs to the transferase hexapeptide repeat family. LpxD subfamily. As to quaternary structure, homotrimer.

It catalyses the reaction a UDP-3-O-[(3R)-3-hydroxyacyl]-alpha-D-glucosamine + a (3R)-hydroxyacyl-[ACP] = a UDP-2-N,3-O-bis[(3R)-3-hydroxyacyl]-alpha-D-glucosamine + holo-[ACP] + H(+). The protein operates within bacterial outer membrane biogenesis; LPS lipid A biosynthesis. In terms of biological role, catalyzes the N-acylation of UDP-3-O-acylglucosamine using 3-hydroxyacyl-ACP as the acyl donor. Is involved in the biosynthesis of lipid A, a phosphorylated glycolipid that anchors the lipopolysaccharide to the outer membrane of the cell. This chain is UDP-3-O-acylglucosamine N-acyltransferase 1, found in Gloeobacter violaceus (strain ATCC 29082 / PCC 7421).